A 396-amino-acid chain; its full sequence is Transcription factor E2FC (396 aa).

Polar residues predominate over residues 34–48; sequence PRYSSLTPSSTNRPF. The tract at residues 34–57 is disordered; that stretch reads PRYSSLTPSSTNRPFSVSQSLPNS. Residues 155 to 220 mediate DNA binding; it reads RYDSSLGLLT…TTKNHIRWKG (66 aa). Positions 226-268 form a coiled coil; that stretch reads QKDLGDQISRLKSEVESMQSEESRLDDLIRERQEALRSLEEDD. The segment at 236-264 is leucine-zipper; sequence LKSEVESMQSEESRLDDLIRERQEALRSL. Residues 376 to 391 form a retinoblastoma protein binding region; sequence DYWFESDAEVSLTDLW.

Belongs to the E2F/DP family. As to quaternary structure, heterodimer with DP proteins. Interacts preferentially with DPB, but also with DPA. No interaction with DPB when phosphorylated. Interacts with SKP2A, CDKA-1 and maize retinoblastoma-related protein RBR1. Component of a DREAM-like complex which modulates a variety of developmentally regulated genes and of the mitotic genes in proliferating and differentiated cells. Interacts with MYB3R3 at later stages of leaves development. Post-translationally, phosphorylated by cyclin-dependent kinase. Phosphorylation is necessary to target E2FC for proteolysis. As to expression, expressed in meristematic areas, vascular tissues, apical part of the roots, cotyledons, upper region of the hypocotyls, trichomes, young flower buds and pollen grains.

It localises to the cytoplasm. In terms of biological role, involved in transcriptional repression. May act by repressing E2F-regulated genes in mature differentiated cells, but is not an antagonist of E2FA. Restricts cell division and is involved in the coordination between cell proliferation and endoreduplication during development. May play a role during the transition from skotomorphogenesis to photomorphogenesis. Regulated by phosphorylation-dependent proteolysis via the protein-ubiquitin ligase SCF(SKP2A) complex. In Arabidopsis thaliana (Mouse-ear cress), this protein is Transcription factor E2FC (E2FC).